Reading from the N-terminus, the 429-residue chain is C4-dicarboxylate transport protein (429 aa).

Helical transmembrane passes span 9–29 (VLYVQVIFAIIVGVILGHFYP), 45–65 (LIKMVIGPIIFCTVVTGIAGM), 79–99 (LLYFEVVSTFALLLGLAATHI), 149–169 (GEILQILLIALLFGSVLAHLG), 185–205 (VLFGIVHIVTKLAPIGAFGAM), 223–243 (LIGTFYLTSIVFVLVVLGTIA), 308–328 (IYMTMAVLFIAQATNIELTWM), and 356–376 (AATLAVVPTIPLSGMVLILGI).

This sequence belongs to the dicarboxylate/amino acid:cation symporter (DAACS) (TC 2.A.23) family.

It localises to the cell inner membrane. Functionally, responsible for the transport of dicarboxylates such as succinate, fumarate, and malate from the periplasm across the membrane. This Burkholderia ambifaria (strain ATCC BAA-244 / DSM 16087 / CCUG 44356 / LMG 19182 / AMMD) (Burkholderia cepacia (strain AMMD)) protein is C4-dicarboxylate transport protein.